Here is a 140-residue protein sequence, read N- to C-terminus: Putative pre-16S rRNA nuclease (140 aa).

It belongs to the YqgF nuclease family.

It localises to the cytoplasm. Could be a nuclease involved in processing of the 5'-end of pre-16S rRNA. This chain is Putative pre-16S rRNA nuclease, found in Actinobacillus succinogenes (strain ATCC 55618 / DSM 22257 / CCUG 43843 / 130Z).